We begin with the raw amino-acid sequence, 671 residues long: Solute carrier family 5 member 4 (671 aa).

Topologically, residues Met1–Ala38 are cytoplasmic. The helical transmembrane segment at Asp39–Val59 threads the bilayer. The Extracellular segment spans residues Lys60–Thr65. Residues Val66–Phe86 form a helical membrane-spanning segment. Residues Ala87–Asn89 lie on the Cytoplasmic side of the membrane. Residues Ile90 to Thr110 form a helical membrane-spanning segment. Residues Ala111–Ser116 are Extracellular-facing. A helical transmembrane segment spans residues Phe117–Met137. The Cytoplasmic segment spans residues Thr138 to Leu159. A helical membrane pass occupies residues Ser160 to Ile180. Residue Lys181 is a topological domain, extracellular. Residues Leu182–Phe202 form a helical membrane-spanning segment. The Cytoplasmic segment spans residues Thr203 to Gln218. The helical transmembrane segment at Ala219–Gly239 threads the bilayer. Residues Tyr240–Pro288 are Extracellular-facing. Residues Gly289 to Val309 traverse the membrane as a helical segment. Topologically, residues Gln310–Ala324 are cytoplasmic. Residues Cys325–Ile345 form a helical membrane-spanning segment. Residues Ser346–Pro378 are Extracellular-facing. Residues Met379–Ala399 form a helical membrane-spanning segment. The Cytoplasmic segment spans residues Ser400 to Leu434. A helical membrane pass occupies residues Ile435–Val455. Over Glu456–Thr467 the chain is Extracellular. The helical transmembrane segment at Glu468 to Cys488 threads the bilayer. The Cytoplasmic portion of the chain corresponds to Lys489–Gln494. Residues Gly495–Phe515 traverse the membrane as a helical segment. Topologically, residues Ser516 to Tyr537 are extracellular. A helical transmembrane segment spans residues Leu538–Leu558. Topologically, residues Thr559 to Thr650 are cytoplasmic. Residues Asp583–Glu593 show a composition bias toward acidic residues. The interval Asp583–Glu604 is disordered. The span at Ala594–Glu604 shows a compositional bias: basic and acidic residues. The chain crosses the membrane as a helical span at residues Val651–Ala671.

It belongs to the sodium:solute symporter (SSF) (TC 2.A.21) family.

The protein resides in the cell membrane. Functionally, generates D-glucose-induced depolarization in a pH-dependent and Na(+)-independent manner, with activity in acidic conditions (pH 5) but not neutral conditions. The polypeptide is Solute carrier family 5 member 4 (Rattus norvegicus (Rat)).